The primary structure comprises 182 residues: ATP-dependent protease subunit HslV (182 aa).

Residue T12 is part of the active site. A167, C170, and T173 together coordinate Na(+).

It belongs to the peptidase T1B family. HslV subfamily. As to quaternary structure, a double ring-shaped homohexamer of HslV is capped on each side by a ring-shaped HslU homohexamer. The assembly of the HslU/HslV complex is dependent on binding of ATP.

Its subcellular location is the cytoplasm. The enzyme catalyses ATP-dependent cleavage of peptide bonds with broad specificity.. Allosterically activated by HslU binding. Functionally, protease subunit of a proteasome-like degradation complex believed to be a general protein degrading machinery. This is ATP-dependent protease subunit HslV from Chlorobium phaeobacteroides (strain DSM 266 / SMG 266 / 2430).